Here is a 183-residue protein sequence, read N- to C-terminus: Thioredoxin/glutathione peroxidase BtuE (183 aa).

The active site involves cysteine 37.

It belongs to the glutathione peroxidase family. BtuE subfamily.

It localises to the periplasm. It catalyses the reaction 2 glutathione + H2O2 = glutathione disulfide + 2 H2O. The catalysed reaction is a hydroperoxide + [thioredoxin]-dithiol = an alcohol + [thioredoxin]-disulfide + H2O. In terms of biological role, non-specific peroxidase that can use thioredoxin or glutathione as a reducing agent. In vitro, utilizes preferentially thioredoxin A to decompose hydrogen peroxide as well as cumene-, tert-butyl-, and linoleic acid hydroperoxides, suggesting that it may have one or more organic hydroperoxide as its physiological substrate. The protein is Thioredoxin/glutathione peroxidase BtuE of Escherichia coli (strain K12).